The following is a 360-amino-acid chain: Phospho-N-acetylmuramoyl-pentapeptide-transferase (360 aa).

10 helical membrane passes run 25–45 (RTIY…PWLI), 73–93 (TMGG…WADL), 94–114 (TNAY…IGFV), 134–154 (FCLQ…GLNG), 173–193 (PGYV…VNLT), 198–218 (GLAI…AYVA), 240–260 (VFCG…AYPA), 262–282 (IFMG…VAIL), 287–307 (LALV…ILQV), and 337–357 (KVIV…VSTL).

Belongs to the glycosyltransferase 4 family. MraY subfamily. It depends on Mg(2+) as a cofactor.

Its subcellular location is the cell inner membrane. The enzyme catalyses UDP-N-acetyl-alpha-D-muramoyl-L-alanyl-gamma-D-glutamyl-meso-2,6-diaminopimeloyl-D-alanyl-D-alanine + di-trans,octa-cis-undecaprenyl phosphate = di-trans,octa-cis-undecaprenyl diphospho-N-acetyl-alpha-D-muramoyl-L-alanyl-D-glutamyl-meso-2,6-diaminopimeloyl-D-alanyl-D-alanine + UMP. Its pathway is cell wall biogenesis; peptidoglycan biosynthesis. Functionally, catalyzes the initial step of the lipid cycle reactions in the biosynthesis of the cell wall peptidoglycan: transfers peptidoglycan precursor phospho-MurNAc-pentapeptide from UDP-MurNAc-pentapeptide onto the lipid carrier undecaprenyl phosphate, yielding undecaprenyl-pyrophosphoryl-MurNAc-pentapeptide, known as lipid I. The chain is Phospho-N-acetylmuramoyl-pentapeptide-transferase from Desulfatibacillum aliphaticivorans.